The sequence spans 521 residues: Beta-glucosidase 6 (521 aa).

The signal sequence occupies residues 1–38; that stretch reads MGRIKSSSGRCSTARLEAVAVLVVVFGVASSSLRGCIA. A beta-D-glucoside-binding positions include Gln64, His165, and 210–211; that span reads NE. The Proton donor role is filled by Glu211. Cysteines 230 and 238 form a disulfide. The N-linked (GlcNAc...) asparagine glycan is linked to Asn291. Residue Tyr354 coordinates a beta-D-glucoside. Residues Asn362 and Asn372 are each glycosylated (N-linked (GlcNAc...) asparagine). A beta-D-glucoside-binding positions include Glu427, Trp477, 484–485, and Phe493; that span reads EW. The active-site Nucleophile is the Glu427.

This sequence belongs to the glycosyl hydrolase 1 family. In terms of assembly, homodimer.

The protein localises to the secreted. It catalyses the reaction Hydrolysis of terminal, non-reducing beta-D-glucosyl residues with release of beta-D-glucose.. In terms of biological role, hydrolyzes glycosides, oligosaccharides and hydrophobic glycosides. Possesses gibberellin ester beta-D-glucosidase activity. Can hydrolyze gibberellin A4 beta-D-glucosyl ester in vitro. The sequence is that of Beta-glucosidase 6 from Oryza sativa subsp. japonica (Rice).